The sequence spans 226 residues: Ribosomal RNA small subunit methyltransferase G (226 aa).

Residues Gly86, Leu91, 137–138, and Arg150 each bind S-adenosyl-L-methionine; that span reads VE.

Belongs to the methyltransferase superfamily. RNA methyltransferase RsmG family.

Its subcellular location is the cytoplasm. The catalysed reaction is guanosine(527) in 16S rRNA + S-adenosyl-L-methionine = N(7)-methylguanosine(527) in 16S rRNA + S-adenosyl-L-homocysteine. Its function is as follows. Specifically methylates the N7 position of guanine in position 527 of 16S rRNA. The protein is Ribosomal RNA small subunit methyltransferase G of Polaromonas sp. (strain JS666 / ATCC BAA-500).